The primary structure comprises 368 residues: uncharacterized protein (368 aa).

The signal sequence occupies residues M1–A19. 4 N-linked (GlcNAc...) asparagine; by host glycosylation sites follow: N99, N170, N266, and N295.

This is an uncharacterized protein from Ostreid herpesvirus 1 (isolate France) (OsHV-1).